The sequence spans 342 residues: GTPase Obg (342 aa).

An Obg domain is found at 1–159; it reads MQFIDQAQIE…KLLRLELKLL (159 aa). In terms of domain architecture, OBG-type G spans 160-330; that stretch reads AEVGIIGLPN…MLQEVWGILD (171 aa). Residues 166–173, 191–195, 213–216, 280–283, and 311–313 contribute to the GTP site; these read GLPNAGKS, FTTLI, DIPG, NKID, and SAV. Residues Ser-173 and Thr-193 each coordinate Mg(2+).

This sequence belongs to the TRAFAC class OBG-HflX-like GTPase superfamily. OBG GTPase family. Monomer. Mg(2+) is required as a cofactor.

Its subcellular location is the cytoplasm. In terms of biological role, an essential GTPase which binds GTP, GDP and possibly (p)ppGpp with moderate affinity, with high nucleotide exchange rates and a fairly low GTP hydrolysis rate. Plays a role in control of the cell cycle, stress response, ribosome biogenesis and in those bacteria that undergo differentiation, in morphogenesis control. This is GTPase Obg from Trichormus variabilis (strain ATCC 29413 / PCC 7937) (Anabaena variabilis).